The primary structure comprises 1595 residues: A disintegrin and metalloproteinase with thrombospondin motifs 7 (1595 aa).

Positions 1–20 (MHRGLNLLLILCALAPHVLG) are cleaved as a signal peptide. Residues 21–217 (PASGLPTEGR…QRQQKRRQQR (197 aa)) constitute a propeptide that is removed on maturation. N-linked (GlcNAc...) asparagine glycosylation is found at Asn84 and Asn105. A disordered region spans residues 165 to 218 (PGHAQPHMVYKHKRSGQQDDSRTSGTCGVQGSPELKHQREHWEQRQQKRRQQRS). Residues 189 to 196 (GTCGVQGS) carry the Cysteine switch motif. Cys191 is a Zn(2+) binding site. A compositionally biased stretch (basic and acidic residues) spans 198-210 (ELKHQREHWEQRQ). Residues 223-434 (KWVETLVVAD…GWGLCLDDRP (212 aa)) form the Peptidase M12B domain. 11 disulfides stabilise this stretch: Cys299–Cys353, Cys328–Cys335, Cys347–Cys429, Cys386–Cys413, Cys456–Cys479, Cys467–Cys485, Cys474–Cys504, Cys498–Cys509, Cys532–Cys569, Cys536–Cys574, and Cys547–Cys559. His369 contacts Zn(2+). Glu370 is an active-site residue. Zn(2+) is bound by residues His373 and His379. The region spanning 444–519 (VLPGVLYDVN…VPEGFQPETV (76 aa)) is the Disintegrin domain. One can recognise a TSP type-1 1 domain in the interval 520 to 575 (DGGWSGWSAWSVCSRSCGVGVRSSERQCTQPVPKNKGKYCVGERKRYRLCNLQACP). Asn619 carries N-linked (GlcNAc...) asparagine glycosylation. The spacer stretch occupies residues 680-791 (HTVSRTFKEA…PGVHYKYTIQ (112 aa)). TSP type-1 domains follow at residues 801 to 860 (PEFS…EPCP), 861 to 917 (ARWW…IPCY), and 922 to 975 (CPSS…QPCQ). Disordered regions lie at residues 989–1035 (GSSS…LDPP), 1077–1121 (PPHI…SHSP), 1179–1234 (REDT…LSPD), and 1255–1315 (KPVH…APTD). Pro residues-rich tracts occupy residues 1005-1015 (QPVPRPSPASS) and 1079-1089 (HIRPTEPPSDS). Over residues 1220-1232 (SSPSNSTTQASLS) the composition is skewed to low complexity. Over residues 1268–1280 (QIQTPHTEGTQSP) the composition is skewed to polar residues. TSP type-1 domains follow at residues 1320-1368 (KNAS…RHCH), 1371-1431 (PCAA…QPCL), 1433-1476 (WYTS…PCNT), and 1478-1538 (PCTQ…EDCE). The PLAC domain occupies 1541–1581 (EPSRCERDRLPFNFCETLRLLGRCQLPTIRAQCCRSCPPLS).

In terms of assembly, interacts with COMP. Zn(2+) serves as cofactor. Post-translationally, glycosylated. Can be O-fucosylated by POFUT2 on a serine or a threonine residue found within the consensus sequence C1-X(2)-(S/T)-C2-G of the TSP type-1 repeat domains where C1 and C2 are the first and second cysteine residue of the repeat, respectively. Fucosylated repeats can then be further glycosylated by the addition of a beta-1,3-glucose residue by the glucosyltransferase, B3GALTL. Fucosylation mediates the efficient secretion of ADAMTS family members. Can also be C-glycosylated with one or two mannose molecules on tryptophan residues within the consensus sequence W-X-X-W of the TPRs. N- and C-glycosylations can also facilitate secretion. In terms of processing, O-glycosylated proteoglycan; contains chondroitin sulfate. May be cleaved by a furin endopeptidase. The precursor is sequentially processed. In terms of tissue distribution, detected in liver, ovary, kidney, testicle, lung and embryo.

Its subcellular location is the secreted. The protein resides in the extracellular space. It is found in the extracellular matrix. Metalloprotease. Was previously shown to degrade COMP. However, a later study found no activity against COMP. This chain is A disintegrin and metalloproteinase with thrombospondin motifs 7 (Adamts7), found in Rattus norvegicus (Rat).